Reading from the N-terminus, the 266-residue chain is Apolipoprotein A-I (266 aa).

Positions 1 to 18 (MKAVVLTLAVLFLTGSQA) are cleaved as a signal peptide. 2 consecutive repeat copies span residues 67–88 (LKLLDNWDSLSSTVAKLREQIG) and 89–110 (PVTQEFWDNLEKETEVLRQEMN). The interval 67-266 (LKLLDNWDSL…DEATKKLNSQ (200 aa)) is 10 X approximate tandem repeats. M109 bears the Methionine sulfoxide mark. The stretch at 111-121 (KDLEEVKKKVQ) is one 3; half-length repeat. 5 consecutive repeat copies span residues 122–143 (PYLDEFQSKWHEEVELYRQKVA), 144–165 (PLGAELREGARQKLQELQEKLS), 166–187 (PLGEELRDRARTHVDALRAQLA), 188–209 (PYSEQLRERLAARLQALKEGGG), and 210–231 (AALTEYHAKASEHLSALREKAK). The stretch at 232-242 (PALEDLRQGLL) is one 9; half-length repeat. Repeat 10 spans residues 243 to 266 (PVLENFRDSLLAAVDEATKKLNSQ).

This sequence belongs to the apolipoprotein A1/A4/E family. As to quaternary structure, homodimer. Interacts with APOA1BP and CLU. Component of a sperm activating protein complex (SPAP), consisting of APOA1, an immunoglobulin heavy chain, an immunoglobulin light chain and albumin. Interacts with NDRG1. Interacts with SCGB3A2. Interacts with NAXE and YJEFN3. Post-translationally, glycosylated. In terms of processing, palmitoylated. Phosphorylation sites are present in the extracellular medium.

Its subcellular location is the secreted. Its function is as follows. Participates in the reverse transport of cholesterol from tissues to the liver for excretion by promoting cholesterol efflux from tissues and by acting as a cofactor for the lecithin cholesterol acyltransferase (LCAT). As part of the SPAP complex, activates spermatozoa motility. This Neomonachus schauinslandi (Hawaiian monk seal) protein is Apolipoprotein A-I (APOA1).